Here is a 601-residue protein sequence, read N- to C-terminus: NADH-ubiquinone oxidoreductase chain 5 (601 aa).

The next 15 helical transmembrane spans lie at 3–23, 36–56, 84–104, 114–134, 140–160, 171–191, 201–221, 240–260, 272–292, 324–346, 365–385, 404–426, 456–476, 483–503, and 581–601; these read LIMP…MMSY, VTSS…MFLL, FFSI…MEFS, INQF…LVTA, LFIG…WWYG, AILY…WLLL, IFML…AAAG, TPVS…FLLV, ILTM…ICAL, AFLH…GSII, MPFT…MPFL, NAWA…TRLI, LALG…PLIT, LYMK…AMGL, and LIKL…MLII.

Belongs to the complex I subunit 5 family.

The protein resides in the mitochondrion inner membrane. It carries out the reaction a ubiquinone + NADH + 5 H(+)(in) = a ubiquinol + NAD(+) + 4 H(+)(out). Functionally, core subunit of the mitochondrial membrane respiratory chain NADH dehydrogenase (Complex I) that is believed to belong to the minimal assembly required for catalysis. Complex I functions in the transfer of electrons from NADH to the respiratory chain. The immediate electron acceptor for the enzyme is believed to be ubiquinone. The sequence is that of NADH-ubiquinone oxidoreductase chain 5 (MT-ND5) from Dasypus novemcinctus (Nine-banded armadillo).